Reading from the N-terminus, the 1232-residue chain is DNA-directed RNA polymerase subunit beta (1232 aa).

The tract at residues 1170–1232 is disordered; it reads SVDEDADELE…LDLDDFGDEH (63 aa). Over residues 1171–1180 the composition is skewed to acidic residues; that stretch reads VDEDADELEV. Basic and acidic residues predominate over residues 1189 to 1198; it reads PEEKEEKEKE. Over residues 1199-1232 the composition is skewed to acidic residues; it reads DSDEYDDLREEDVEPDLEELSLDDLDLDDFGDEH.

The protein belongs to the RNA polymerase beta chain family. As to quaternary structure, the RNAP catalytic core consists of 2 alpha, 1 beta, 1 beta' and 1 omega subunit. When a sigma factor is associated with the core the holoenzyme is formed, which can initiate transcription.

It catalyses the reaction RNA(n) + a ribonucleoside 5'-triphosphate = RNA(n+1) + diphosphate. Its function is as follows. DNA-dependent RNA polymerase catalyzes the transcription of DNA into RNA using the four ribonucleoside triphosphates as substrates. In Clostridium botulinum (strain Kyoto / Type A2), this protein is DNA-directed RNA polymerase subunit beta.